The following is a 182-amino-acid chain: Probable chorismate pyruvate-lyase (182 aa).

Residues arginine 81, leucine 119, and glutamate 171 each coordinate substrate.

It belongs to the UbiC family.

Its subcellular location is the cytoplasm. It carries out the reaction chorismate = 4-hydroxybenzoate + pyruvate. Its pathway is cofactor biosynthesis; ubiquinone biosynthesis. Removes the pyruvyl group from chorismate, with concomitant aromatization of the ring, to provide 4-hydroxybenzoate (4HB) for the ubiquinone pathway. This chain is Probable chorismate pyruvate-lyase, found in Pseudomonas putida (Arthrobacter siderocapsulatus).